Consider the following 520-residue polypeptide: GMP synthase [glutamine-hydrolyzing] (520 aa).

One can recognise a Glutamine amidotransferase type-1 domain in the interval T9–G202. C86 (nucleophile) is an active-site residue. Residues H176 and E178 contribute to the active site. In terms of domain architecture, GMPS ATP-PPase spans W203 to R395. S230–S236 is an ATP binding site.

In terms of assembly, homodimer.

It carries out the reaction XMP + L-glutamine + ATP + H2O = GMP + L-glutamate + AMP + diphosphate + 2 H(+). It participates in purine metabolism; GMP biosynthesis; GMP from XMP (L-Gln route): step 1/1. Functionally, catalyzes the synthesis of GMP from XMP. The polypeptide is GMP synthase [glutamine-hydrolyzing] (Brucella ovis (strain ATCC 25840 / 63/290 / NCTC 10512)).